A 136-amino-acid chain; its full sequence is Histone H3.3 (136 aa).

Residues 1-41 are disordered; that stretch reads MARTKQTARKSTGGKAPRKQLASKAARKSAPVTGGVKKPHR. An N6,N6,N6-trimethyllysine; alternate modification is found at K5. N6,N6-dimethyllysine; alternate is present on K5. N6-methyllysine; alternate is present on residues K5 and K10. K10 is subject to N6-acetyllysine; alternate. S11 bears the Phosphoserine mark. K15 carries the post-translational modification N6,N6-dimethyllysine; alternate. N6-acetyllysine; alternate occurs at positions 15, 19, 24, 28, and 37. N6-methyllysine; alternate is present on residues K19, K24, K28, and K37. Residues K28 and K37 each carry the N6,N6,N6-trimethyllysine; alternate modification. 2 positions are modified to N6,N6-dimethyllysine; alternate: K28 and K37. Residues K57 and K65 each carry the N6-acetyllysine modification. The residue at position 80 (K80) is an N6,N6,N6-trimethyllysine; alternate. At K80 the chain carries N6,N6-dimethyllysine; alternate. K80 carries the N6-methyllysine; alternate modification.

This sequence belongs to the histone H3 family. In terms of assembly, the nucleosome is a histone octamer containing two molecules each of H2A, H2B, H3 and H4 assembled in one H3-H4 heterotetramer and two H2A-H2B heterodimers. The octamer wraps approximately 147 bp of DNA. Post-translationally, phosphorylated to form H3S10ph. H3S10ph promotes subsequent H3K14ac formation and is required for transcriptional activation through TBP recruitment to the promoters. Mono-, di- and trimethylated by the COMPASS complex to form H3K4me1/2/3. H3K4me activates gene expression by regulating transcription elongation and plays a role in telomere length maintenance. H3K4me enrichment correlates with transcription levels, and occurs in a 5' to 3' gradient with H3K4me3 enrichment at the 5'-end of genes, shifting to H3K4me2 and then H3K4me1. Methylated by SET2 to form H3K36me. H3K36me represses gene expression. Methylated by DOT1 to form H3K79me. H3K79me is required for association of SIR proteins with telomeric regions and for telomeric silencing. The COMPASS-mediated formation of H3K4me2/3 and the DOT1-mediated formation of H3K79me require H2BK123ub1. In terms of processing, acetylation of histone H3 leads to transcriptional activation. H3K14ac formation by GCN5 is promoted by H3S10ph. H3K14ac can also be formed by ESA1. H3K56ac formation occurs predominantly in newly synthesized H3 molecules during G1, S and G2/M of the cell cycle and may be involved in DNA repair.

It is found in the nucleus. Its subcellular location is the chromosome. Functionally, core component of nucleosome. Nucleosomes wrap and compact DNA into chromatin, limiting DNA accessibility to the cellular machineries which require DNA as a template. Histones thereby play a central role in transcription regulation, DNA repair, DNA replication and chromosomal stability. DNA accessibility is regulated via a complex set of post-translational modifications of histones, also called histone code, and nucleosome remodeling. This is Histone H3.3 (HHT3) from Meyerozyma guilliermondii (strain ATCC 6260 / CBS 566 / DSM 6381 / JCM 1539 / NBRC 10279 / NRRL Y-324) (Yeast).